The following is a 107-amino-acid chain: U1-lycotoxin-Ls1g (107 aa).

The first 20 residues, 1-20, serve as a signal peptide directing secretion; sequence MMKVLVVVALLVTLISYSSS. Residues 21–41 constitute a propeptide that is removed on maturation; sequence EGIDDLEADELLSLMANEQTR. Cystine bridges form between Cys-51–Cys-68, Cys-58–Cys-86, and Cys-70–Cys-84.

The protein belongs to the neurotoxin 19 (CSTX) family. 04 (U1-Lctx) subfamily. In terms of tissue distribution, expressed by the venom gland.

It is found in the secreted. The sequence is that of U1-lycotoxin-Ls1g from Lycosa singoriensis (Wolf spider).